The primary structure comprises 473 residues: Bifunctional protein HldE (473 aa).

A ribokinase region spans residues 1 to 317 (MKLSMPRFDQ…RRAIQREEGS (317 aa)). 194–197 (NLSE) provides a ligand contact to ATP. Asp263 is a catalytic residue. The cytidylyltransferase stretch occupies residues 343-473 (FTNGCFDILH…TAIVEKIRKN (131 aa)).

The protein in the N-terminal section; belongs to the carbohydrate kinase PfkB family. It in the C-terminal section; belongs to the cytidylyltransferase family. Homodimer.

It catalyses the reaction D-glycero-beta-D-manno-heptose 7-phosphate + ATP = D-glycero-beta-D-manno-heptose 1,7-bisphosphate + ADP + H(+). The catalysed reaction is D-glycero-beta-D-manno-heptose 1-phosphate + ATP + H(+) = ADP-D-glycero-beta-D-manno-heptose + diphosphate. It functions in the pathway nucleotide-sugar biosynthesis; ADP-L-glycero-beta-D-manno-heptose biosynthesis; ADP-L-glycero-beta-D-manno-heptose from D-glycero-beta-D-manno-heptose 7-phosphate: step 1/4. Its pathway is nucleotide-sugar biosynthesis; ADP-L-glycero-beta-D-manno-heptose biosynthesis; ADP-L-glycero-beta-D-manno-heptose from D-glycero-beta-D-manno-heptose 7-phosphate: step 3/4. Catalyzes the phosphorylation of D-glycero-D-manno-heptose 7-phosphate at the C-1 position to selectively form D-glycero-beta-D-manno-heptose-1,7-bisphosphate. Its function is as follows. Catalyzes the ADP transfer from ATP to D-glycero-beta-D-manno-heptose 1-phosphate, yielding ADP-D-glycero-beta-D-manno-heptose. The polypeptide is Bifunctional protein HldE (Pseudomonas putida (strain W619)).